The following is a 375-amino-acid chain: uncharacterized protein (375 aa).

A signal peptide spans 1–20 (MKNKLFIILIIFIILKIVIC). The Extracellular segment spans residues 21–335 (QNTTPSKLIP…EKQVERKITP (315 aa)). The span at 30–42 (PQQQQKQKQQQTQ) shows a compositional bias: low complexity. 2 disordered regions span residues 30 to 74 (PQQQ…QPQQ) and 113 to 253 (SQNV…PHNH). The span at 43 to 53 (PHHHHHHHQQH) shows a compositional bias: basic residues. The segment covering 54–74 (QQHQQQHQPNQQIKQQQQPQQ) has biased composition (low complexity). The segment covering 120–151 (PPHHTQQRVPHHHGPNGAPHHHGPNGAPHHHG) has biased composition (basic residues). The segment covering 168-180 (GHNTQGHVQTNHV) has biased composition (polar residues). Over residues 181 to 220 (NNINKNNINNNNNNNNNNNNNNNNNNNNNINDNKNIRNNI) the composition is skewed to low complexity. The helical transmembrane segment at 336–356 (IMVLYILLASTMVIQLFIMVF) threads the bilayer. At 357 to 375 (KQVKHIREINAKTTMESLL) the chain is on the cytoplasmic side.

The protein localises to the membrane. This is an uncharacterized protein from Dictyostelium discoideum (Social amoeba).